The following is a 252-amino-acid chain: Large ribosomal subunit protein uL4 (252 aa).

It belongs to the universal ribosomal protein uL4 family. In terms of assembly, part of the 50S ribosomal subunit.

One of the primary rRNA binding proteins, this protein initially binds near the 5'-end of the 23S rRNA. It is important during the early stages of 50S assembly. It makes multiple contacts with different domains of the 23S rRNA in the assembled 50S subunit and ribosome. Functionally, forms part of the polypeptide exit tunnel. The polypeptide is Large ribosomal subunit protein uL4 (Methanococcus maripaludis (strain C7 / ATCC BAA-1331)).